A 212-amino-acid polypeptide reads, in one-letter code: HTH-type transcriptional regulatory protein RaaS (212 aa).

Positions 6–65 (LTAHARIREAAIEQFGRHGFGVGLRAIAEAAGVSAALVIHHFGSKEGLRKACDDFVAEEI) constitute an HTH tetR-type domain. The H-T-H motif DNA-binding region spans 28 to 47 (GLRAIAEAAGVSAALVIHHF).

As to quaternary structure, homodimer. Interacts with long chain acyl-CoA derivatives. Interacts with several drugs such rhodamine 6G, ethidium and safranin O.

Its activity is regulated as follows. Interaction with long chain acyl-CoA derivatives (oleoyl-CoA and, to lesser extent, stearoyl-CoA) prevents binding to DNA, leading to the expression of the target genes. Long chain acyl-CoA derivatives may serve as biological indicators of the bacterial metabolic state. Functionally, regulates the expression of the Rv1217c-Rv1218c multidrug efflux system and its own expression. Acts by binding to promoter regions of Rv1219c and upstream of the Rv1218c gene. Important for survival in prolonged stationary phase and during macrophage infection. May be used to eliminate non-growing mycobacteria. This chain is HTH-type transcriptional regulatory protein RaaS, found in Mycobacterium tuberculosis (strain ATCC 25618 / H37Rv).